Here is a 339-residue protein sequence, read N- to C-terminus: MTVREPLRPVLYDDARDLVRLLDQKALPAEERWLELSTADAVAAAIRDLTVRGAPAIGVAAAYALAVEARRGAGPERLRAAADLLARARPTAVNLAWAVRRMSARLGAPAADVLAEAHAIRDEDEAACRRIGALGAPLVPARARVLTHCNAGALATAGYGTALGVVRAAVESGNAISVFADETRPFLQGARLTAWELHRDGIPVTLLTDGMAGWLMARGEIGCVVVGADRIAANGDVANKIGTYALAVLAAHHRLPFYVAAPWSTVDLATPTGADIPIEERGADEVVMLAGQRIAPAGVPARYPAFDVTPAALVTAIVTERGVVRAPHAAGLATLASAR.

Residues 52 to 54 (RGA), Arg89, and Gln188 contribute to the substrate site. Catalysis depends on Asp229, which acts as the Proton donor. 239-240 (NK) is a substrate binding site.

Belongs to the eIF-2B alpha/beta/delta subunits family. MtnA subfamily.

It catalyses the reaction 5-(methylsulfanyl)-alpha-D-ribose 1-phosphate = 5-(methylsulfanyl)-D-ribulose 1-phosphate. The protein operates within amino-acid biosynthesis; L-methionine biosynthesis via salvage pathway; L-methionine from S-methyl-5-thio-alpha-D-ribose 1-phosphate: step 1/6. Its function is as follows. Catalyzes the interconversion of methylthioribose-1-phosphate (MTR-1-P) into methylthioribulose-1-phosphate (MTRu-1-P). This Anaeromyxobacter sp. (strain K) protein is Methylthioribose-1-phosphate isomerase.